The following is a 457-amino-acid chain: Paired box protein Pax-8 (457 aa).

Positions 9-135 form a DNA-binding region, paired; that stretch reads GHGGLNQLGG…SSINRIIRTK (127 aa). The PAI subdomain stretch occupies residues 12-68; the sequence is GLNQLGGAFVNGRPLPEVVRQRIVDLAHQGVRPCDISRQLRVSHGCVSKILGRYYET. The tract at residues 87–135 is RED subdomain; that stretch reads KVVEKIGDYKRQNPTMFAWEIRDRLLAEGVCDNDTVPSVSSINRIIRTK. Positions 159–182 are enriched in polar residues; sequence LIPSSAVTPPESPQSDSLGSTYSI. The interval 159 to 224 is disordered; that stretch reads LIPSSAVTPP…SSSSGPRKHL (66 aa). Residue Ser-304 is modified to Phosphoserine.

Interacts with WWTR1. In terms of tissue distribution, expressed in the developing excretory system and the thyroid gland.

The protein localises to the nucleus. Thought to encode a transcription factor. It may have a role in kidney cell differentiation. May play a regulatory role in mammalian development. The polypeptide is Paired box protein Pax-8 (Pax8) (Mus musculus (Mouse)).